Reading from the N-terminus, the 291-residue chain is ATP synthase gamma chain (291 aa).

The protein belongs to the ATPase gamma chain family. In terms of assembly, F-type ATPases have 2 components, CF(1) - the catalytic core - and CF(0) - the membrane proton channel. CF(1) has five subunits: alpha(3), beta(3), gamma(1), delta(1), epsilon(1). CF(0) has three main subunits: a, b and c.

It is found in the cell inner membrane. Its function is as follows. Produces ATP from ADP in the presence of a proton gradient across the membrane. The gamma chain is believed to be important in regulating ATPase activity and the flow of protons through the CF(0) complex. The polypeptide is ATP synthase gamma chain (Neisseria gonorrhoeae (strain ATCC 700825 / FA 1090)).